Consider the following 199-residue polypeptide: ATP-dependent Clp protease proteolytic subunit (199 aa).

S98 functions as the Nucleophile in the catalytic mechanism. H123 is a catalytic residue.

It belongs to the peptidase S14 family. In terms of assembly, fourteen ClpP subunits assemble into 2 heptameric rings which stack back to back to give a disk-like structure with a central cavity, resembling the structure of eukaryotic proteasomes.

Its subcellular location is the cytoplasm. It carries out the reaction Hydrolysis of proteins to small peptides in the presence of ATP and magnesium. alpha-casein is the usual test substrate. In the absence of ATP, only oligopeptides shorter than five residues are hydrolyzed (such as succinyl-Leu-Tyr-|-NHMec, and Leu-Tyr-Leu-|-Tyr-Trp, in which cleavage of the -Tyr-|-Leu- and -Tyr-|-Trp bonds also occurs).. In terms of biological role, cleaves peptides in various proteins in a process that requires ATP hydrolysis. Has a chymotrypsin-like activity. Plays a major role in the degradation of misfolded proteins. The polypeptide is ATP-dependent Clp protease proteolytic subunit (Clostridium botulinum (strain Eklund 17B / Type B)).